A 348-amino-acid polypeptide reads, in one-letter code: D-alanine--D-alanine ligase (348 aa).

An ATP-grasp domain is found at 132 to 334 (KRVLESIGIP…YPDLIEVLVT (203 aa)). Residue 162–217 (LARLTFPIFVKPANMGSSVGISKAQTKVELRKAIQLALTYDSRVLIEQGVVAREIE) coordinates ATP. Mg(2+)-binding residues include D288, E301, and N303.

It belongs to the D-alanine--D-alanine ligase family. The cofactor is Mg(2+). It depends on Mn(2+) as a cofactor.

The protein localises to the cytoplasm. The enzyme catalyses 2 D-alanine + ATP = D-alanyl-D-alanine + ADP + phosphate + H(+). It functions in the pathway cell wall biogenesis; peptidoglycan biosynthesis. Cell wall formation. The sequence is that of D-alanine--D-alanine ligase from Streptococcus pyogenes serotype M2 (strain MGAS10270).